A 1066-amino-acid chain; its full sequence is FHIP family protein GI14169 (1066 aa).

The span at 1–11 (MSWLRTSPLRQ) shows a compositional bias: polar residues. Positions 1–35 (MSWLRTSPLRQSLTRSGSSSGNGSSGTATTMRQRP) are disordered. Low complexity predominate over residues 12 to 30 (SLTRSGSSSGNGSSGTATT). Ser500 bears the Phosphoserine mark. A disordered region spans residues 651–682 (GIDVTTTTTASASDTDLEHNNNSSSISSGRRD). The segment covering 655–678 (TTTTTASASDTDLEHNNNSSSISS) has biased composition (low complexity). Ser820 bears the Phosphoserine mark. Disordered regions lie at residues 821 to 913 (PLHQ…GNSA) and 935 to 1007 (SGGE…TGNF). Residues 822 to 855 (LHQQLQHQQQHQQLAQTNSHTQQQQQQQQQQAQQ) show a composition bias toward low complexity. The segment covering 856-874 (RSTYATLSAATPVQASPTS) has biased composition (polar residues). Low complexity predominate over residues 890-913 (SRSITSMFSRRSTSSTPASNGNSA). Residues 947 to 971 (QDSTRGNTCETSLSTAPRQEPQTNV) show a composition bias toward polar residues. The span at 972 to 997 (GSSSNSSIGSSTQTLSGTHSSSTLHG) shows a compositional bias: low complexity.

It belongs to the FHIP family.

The protein is FHIP family protein GI14169 of Drosophila mojavensis (Fruit fly).